The following is a 427-amino-acid chain: MPPIFQRLQQATKMSRRKILLLVLGCSTLSLLIHQGAQLSWYPKLFPLSCPPLQDSPPRPKHMTVAFLKTHKTAGTTVQNILFRFAERHNLTVALPHPSCEHQFCYPRNFSAHFVHPATRPPHVLASHLRFDRAELQRLMPPGTVYVTILREPAAMFESLFSYYNQYCPAFRRVPNASLEAFLRAPEAYYRAGEHFAMFAHNTLAYDLGGDNERSPRDDDAYLAGLIRQVEEVFSLVMIAEYFDESLVLLRRLLAWDLDDVLYARLNARAASSRLAAIPAALAQAARAWNALDAGLYDHFNATFWRRVASAGRACVEREARELREARERLLRRCFGDEPVLRPAAQIRTKQLQPWQPSRKVDIMGYDLPSGRAGPATEACLKLAMPEVQYSSYLLRKQKRRGGMRLRPEPVLDNPPPRPIRALRPGH.

The Cytoplasmic portion of the chain corresponds to 1-19 (MPPIFQRLQQATKMSRRKI). A helical; Signal-anchor for type II membrane protein membrane pass occupies residues 20–40 (LLLVLGCSTLSLLIHQGAQLS). At 41–427 (WYPKLFPLSC…RPIRALRPGH (387 aa)) the chain is on the lumenal side. Residues Asn-90, Asn-109, Asn-176, and Asn-301 are each glycosylated (N-linked (GlcNAc...) asparagine). Residues 404-427 (MRLRPEPVLDNPPPRPIRALRPGH) are disordered.

The protein belongs to the galactose-3-O-sulfotransferase family. It depends on Mg(2+) as a cofactor.

The protein resides in the golgi apparatus. The protein localises to the golgi stack membrane. It functions in the pathway protein modification; carbohydrate sulfation. In terms of biological role, transfers a sulfate to position 3 of non-reducing beta-galactosyl residues in N-glycans and core2-branched O-glycans. Has high activity towards Gal-beta-1,4-GlcNAc, Gal-beta-1,4(Fuc-alpha-1,3)GlcNAc and lower activity towards Gal-beta-1,3(Fuc-alpha-1,4)GlcNAc. The polypeptide is Galactose-3-O-sulfotransferase 3 (GAL3ST3) (Bos taurus (Bovine)).